The following is a 370-amino-acid chain: L-lysine 4-hydroxylase (370 aa).

Fe cation is bound by residues H176, E178, and H310.

Belongs to the clavaminate synthase family. The cofactor is Fe(2+).

The catalysed reaction is L-lysine + 2-oxoglutarate + O2 = (4R)-4-hydroxy-L-lysine + succinate + CO2. Its function is as follows. Alpha-ketoglutarate-dependent dioxygenase that in vitro catalyzes the regio- and stereoselective hydroxylation of L-lysine, leading to (4R)-4-hydroxy-L-lysine. To a lesser extent, can also use (3S)-3-hydroxy-L-lysine as substrate, producing the dihydroxylated product (3R,4R)-3,4-hydroxy-L-lysine. Cannot use D-lysine or L-ornithine as substrate. This Flavobacterium johnsoniae (strain ATCC 17061 / DSM 2064 / JCM 8514 / BCRC 14874 / CCUG 350202 / NBRC 14942 / NCIMB 11054 / UW101) (Cytophaga johnsonae) protein is L-lysine 4-hydroxylase.